Consider the following 876-residue polypeptide: Monofunctional isopimaradiene synthase, chloroplastic (876 aa).

A chloroplast-targeting transit peptide spans 1-64 (MAMPSYSSLS…YLRLGSRKII (64 aa)). The Mg(2+) site is built by D628, D632, N772, T776, and E780. A DDXXD motif motif is present at residues 628 to 632 (DDLYD).

Belongs to the terpene synthase family. Tpsd subfamily. The cofactor is Mg(2+).

The protein localises to the plastid. It is found in the chloroplast. The enzyme catalyses (+)-copalyl diphosphate = isopimara-7,15-diene + diphosphate. It participates in terpene metabolism; oleoresin biosynthesis. Functionally, involved in defensive oleoresin formation in conifers in response to insect attack or other injury. Involved in diterpene (C20) olefins biosynthesis. Monofunctional enzyme lacking the DXDD motif in the class II active site relevant for the cyclization of geranylgeranyl diphosphate (GGPP). Requires (+)-copalyl diphosphate ((+)-CPP) as substrate, but no activity with GGPP or ent-CPP. Isopimaradiene is the major products of the enzyme followed by sandaracopimaradiene. The protein is Monofunctional isopimaradiene synthase, chloroplastic of Pinus contorta (Shore pine).